The chain runs to 468 residues: ATP synthase subunit beta (468 aa).

Position 155–162 (155–162 (GGAGVGKT)) interacts with ATP.

It belongs to the ATPase alpha/beta chains family. F-type ATPases have 2 components, CF(1) - the catalytic core - and CF(0) - the membrane proton channel. CF(1) has five subunits: alpha(3), beta(3), gamma(1), delta(1), epsilon(1). CF(0) has three main subunits: a(1), b(2) and c(9-12). The alpha and beta chains form an alternating ring which encloses part of the gamma chain. CF(1) is attached to CF(0) by a central stalk formed by the gamma and epsilon chains, while a peripheral stalk is formed by the delta and b chains.

The protein resides in the cell membrane. It carries out the reaction ATP + H2O + 4 H(+)(in) = ADP + phosphate + 5 H(+)(out). Its function is as follows. Produces ATP from ADP in the presence of a proton gradient across the membrane. The catalytic sites are hosted primarily by the beta subunits. This chain is ATP synthase subunit beta, found in Streptococcus mutans serotype c (strain ATCC 700610 / UA159).